The primary structure comprises 462 residues: NAD-capped RNA hydrolase NUDT12 (462 aa).

3 ANK repeats span residues 11–40 (EIVTQFHCSAAEGDIAKLTGILSHSPSLLN), 45–74 (NGWTALMYAARNGHPEIVQFLLEKGCDRSI), and 78–98 (SRQTALDIAVFWGYKHIANLL). Position 185 is an N6-succinyllysine (lysine 185). Residues cysteine 284 and cysteine 287 each coordinate Zn(2+). Position 292 is an N6-succinyllysine (lysine 292). Cysteine 302 and cysteine 307 together coordinate Zn(2+). Substrate is bound by residues tyrosine 318, 354–356 (AGF), glutamate 370, glutamate 374, and glutamate 415. The Nudix hydrolase domain maps to 319 to 453 (PRVDPVVIMQ…SRAIAHQLIK (135 aa)). Alanine 354, glutamate 370, glutamate 374, and glutamate 415 together coordinate Mg(2+). A Nudix box motif is present at residues 355–376 (GFIEPGETIEDAVRREVEEESG). A Microbody targeting signal motif is present at residues 460 to 462 (PNL).

Belongs to the Nudix hydrolase family. NudC subfamily. Homodimer. Homodimerization is essential for its catalytic activity and protein stability. Interacts (via ANK repeats) with BLMH. Mg(2+) serves as cofactor. Requires Zn(2+) as cofactor.

The protein localises to the cytoplasm. The protein resides in the peroxisome. It localises to the cytoplasmic granule. The catalysed reaction is a 5'-end NAD(+)-phospho-ribonucleoside in mRNA + H2O = a 5'-end phospho-adenosine-phospho-ribonucleoside in mRNA + beta-nicotinamide D-ribonucleotide + 2 H(+). It carries out the reaction NAD(+) + H2O = beta-nicotinamide D-ribonucleotide + AMP + 2 H(+). The enzyme catalyses NADH + H2O = reduced beta-nicotinamide D-ribonucleotide + AMP + 2 H(+). It catalyses the reaction NADPH + H2O = reduced beta-nicotinamide D-ribonucleotide + adenosine 2',5'-bisphosphate + 2 H(+). Its function is as follows. mRNA decapping enzyme that specifically removes the nicotinamide adenine dinucleotide (NAD) cap from a subset of mRNAs by hydrolyzing the diphosphate linkage to produce nicotinamide mononucleotide (NMN) and 5' monophosphate mRNA. The NAD-cap is present at the 5'-end of some RNAs; in contrast to the canonical N7 methylguanosine (m7G) cap, the NAD cap promotes mRNA decay. Preferentially acts on NAD-capped transcripts in response to nutrient stress. Also acts on free nicotinamide adenine dinucleotide molecules: hydrolyzes NAD(H) into NMN(H) and AMP, and NADPH into NMNH and 2',5'-ADP. May act to regulate the concentration of peroxisomal nicotinamide nucleotide cofactors required for oxidative metabolism in this organelle. Regulates the levels of circadian clock components PER1, PER2, PER3 and CRY2 in the liver. This is NAD-capped RNA hydrolase NUDT12 from Pongo abelii (Sumatran orangutan).